The chain runs to 950 residues: Translation initiation factor IF-2 (950 aa).

2 disordered regions span residues 69–92 (KTKT…AGKA) and 128–352 (KPKV…SNVP). Basic and acidic residues-rich tracts occupy residues 77-86 (AKSKQEDHPR), 128-158 (KPKV…EAKA), 165-186 (AEVK…EKKK), 200-234 (KRAE…DNRR), and 291-312 (NRRD…DGNR). 2 stretches are compositionally biased toward polar residues: residues 322–336 (NRNQ…NWNQ) and 343–352 (YQNNQSSNVP). One can recognise a tr-type G domain in the interval 448 to 619 (ERPAVVTIMG…LLVAEVQELK (172 aa)). The segment at 457–464 (GHVDHGKT) is G1. 457–464 (GHVDHGKT) contributes to the GTP binding site. Positions 482 to 486 (GITQH) are G2. Positions 503 to 506 (DTPG) are G3. GTP-binding positions include 503–507 (DTPGH) and 557–560 (NKID). Residues 557–560 (NKID) form a G4 region. Residues 595-597 (SAK) are G5.

Belongs to the TRAFAC class translation factor GTPase superfamily. Classic translation factor GTPase family. IF-2 subfamily.

Its subcellular location is the cytoplasm. In terms of biological role, one of the essential components for the initiation of protein synthesis. Protects formylmethionyl-tRNA from spontaneous hydrolysis and promotes its binding to the 30S ribosomal subunits. Also involved in the hydrolysis of GTP during the formation of the 70S ribosomal complex. The polypeptide is Translation initiation factor IF-2 (Lactococcus lactis subsp. cremoris (strain SK11)).